Here is a 156-residue protein sequence, read N- to C-terminus: ATP synthase subunit b (156 aa).

A helical membrane pass occupies residues 7–27 (FFAQMVVFFILWWVVAKFIWP).

The protein belongs to the ATPase B chain family. As to quaternary structure, F-type ATPases have 2 components, F(1) - the catalytic core - and F(0) - the membrane proton channel. F(1) has five subunits: alpha(3), beta(3), gamma(1), delta(1), epsilon(1). F(0) has three main subunits: a(1), b(2) and c(10-14). The alpha and beta chains form an alternating ring which encloses part of the gamma chain. F(1) is attached to F(0) by a central stalk formed by the gamma and epsilon chains, while a peripheral stalk is formed by the delta and b chains.

The protein resides in the cell inner membrane. Functionally, f(1)F(0) ATP synthase produces ATP from ADP in the presence of a proton or sodium gradient. F-type ATPases consist of two structural domains, F(1) containing the extramembraneous catalytic core and F(0) containing the membrane proton channel, linked together by a central stalk and a peripheral stalk. During catalysis, ATP synthesis in the catalytic domain of F(1) is coupled via a rotary mechanism of the central stalk subunits to proton translocation. Its function is as follows. Component of the F(0) channel, it forms part of the peripheral stalk, linking F(1) to F(0). This is ATP synthase subunit b from Cupriavidus necator (strain ATCC 17699 / DSM 428 / KCTC 22496 / NCIMB 10442 / H16 / Stanier 337) (Ralstonia eutropha).